A 498-amino-acid chain; its full sequence is N-succinylglutamate 5-semialdehyde dehydrogenase 1 (498 aa).

231-236 (GSSNTG) provides a ligand contact to NAD(+). Residues Glu254 and Cys288 contribute to the active site.

This sequence belongs to the aldehyde dehydrogenase family. AstD subfamily.

The catalysed reaction is N-succinyl-L-glutamate 5-semialdehyde + NAD(+) + H2O = N-succinyl-L-glutamate + NADH + 2 H(+). It participates in amino-acid degradation; L-arginine degradation via AST pathway; L-glutamate and succinate from L-arginine: step 4/5. Catalyzes the NAD-dependent reduction of succinylglutamate semialdehyde into succinylglutamate. The protein is N-succinylglutamate 5-semialdehyde dehydrogenase 1 of Shewanella denitrificans (strain OS217 / ATCC BAA-1090 / DSM 15013).